Here is a 35-residue protein sequence, read N- to C-terminus: Photosystem II reaction center protein T (35 aa).

The chain crosses the membrane as a helical span at residues 3-23; sequence ALVYTFLLVSTLGIIFFAIFF.

It belongs to the PsbT family. As to quaternary structure, PSII is composed of 1 copy each of membrane proteins PsbA, PsbB, PsbC, PsbD, PsbE, PsbF, PsbH, PsbI, PsbJ, PsbK, PsbL, PsbM, PsbT, PsbY, PsbZ, Psb30/Ycf12, at least 3 peripheral proteins of the oxygen-evolving complex and a large number of cofactors. It forms dimeric complexes.

The protein resides in the plastid. It is found in the chloroplast thylakoid membrane. Functionally, found at the monomer-monomer interface of the photosystem II (PS II) dimer, plays a role in assembly and dimerization of PSII. PSII is a light-driven water plastoquinone oxidoreductase, using light energy to abstract electrons from H(2)O, generating a proton gradient subsequently used for ATP formation. In Pinus thunbergii (Japanese black pine), this protein is Photosystem II reaction center protein T.